Reading from the N-terminus, the 321-residue chain is Glutaminase (321 aa).

Substrate contacts are provided by S69, N120, E165, N172, Y196, Y248, and V266.

The protein belongs to the glutaminase family. Homotetramer.

It carries out the reaction L-glutamine + H2O = L-glutamate + NH4(+). The chain is Glutaminase from Bacteroides fragilis (strain ATCC 25285 / DSM 2151 / CCUG 4856 / JCM 11019 / LMG 10263 / NCTC 9343 / Onslow / VPI 2553 / EN-2).